Here is a 341-residue protein sequence, read N- to C-terminus: tRNA N6-adenosine threonylcarbamoyltransferase (341 aa).

Fe cation is bound by residues His-118 and His-122. Residues 141 to 145 (LVSGG), Asp-174, Gly-187, and Asn-281 contribute to the substrate site. Asp-309 contacts Fe cation.

It belongs to the KAE1 / TsaD family. Requires Fe(2+) as cofactor.

Its subcellular location is the cytoplasm. It carries out the reaction L-threonylcarbamoyladenylate + adenosine(37) in tRNA = N(6)-L-threonylcarbamoyladenosine(37) in tRNA + AMP + H(+). Its function is as follows. Required for the formation of a threonylcarbamoyl group on adenosine at position 37 (t(6)A37) in tRNAs that read codons beginning with adenine. Is involved in the transfer of the threonylcarbamoyl moiety of threonylcarbamoyl-AMP (TC-AMP) to the N6 group of A37, together with TsaE and TsaB. TsaD likely plays a direct catalytic role in this reaction. In Desulfitobacterium hafniense (strain Y51), this protein is tRNA N6-adenosine threonylcarbamoyltransferase.